The sequence spans 243 residues: Sugar fermentation stimulation protein homolog (243 aa).

Belongs to the SfsA family.

The chain is Sugar fermentation stimulation protein homolog from Bdellovibrio bacteriovorus (strain ATCC 15356 / DSM 50701 / NCIMB 9529 / HD100).